Consider the following 390-residue polypeptide: Dihydroorotase (390 aa).

Histidine 54 and histidine 56 together coordinate Zn(2+). Substrate is bound by residues 56-58 (HIR) and asparagine 88. Residues lysine 136, histidine 160, histidine 197, and aspartate 259 each coordinate Zn(2+). The residue at position 136 (lysine 136) is an N6-carboxylysine. The active site involves aspartate 259. Residues histidine 263 and 277–278 (PG) each bind substrate.

This sequence belongs to the metallo-dependent hydrolases superfamily. DHOase family. Class I DHOase subfamily. Zn(2+) is required as a cofactor.

It carries out the reaction (S)-dihydroorotate + H2O = N-carbamoyl-L-aspartate + H(+). Its pathway is pyrimidine metabolism; UMP biosynthesis via de novo pathway; (S)-dihydroorotate from bicarbonate: step 3/3. Functionally, catalyzes the reversible cyclization of carbamoyl aspartate to dihydroorotate. This Saccharolobus solfataricus (strain ATCC 35092 / DSM 1617 / JCM 11322 / P2) (Sulfolobus solfataricus) protein is Dihydroorotase.